The following is a 901-amino-acid chain: PGC-1 and ERR-induced regulator in muscle protein 1 (901 aa).

3 disordered regions span residues 29–511 (QAGL…MPAS), 564–671 (SLEG…MGPG), and 731–752 (RHQE…APPP). The segment covering 100–112 (GQQTPSTSAQSEA) has biased composition (polar residues). Over residues 157 to 178 (GEPAGSPESPVHSAAPQRSPGS) the composition is skewed to low complexity. 5 stretches are compositionally biased toward polar residues: residues 267-276 (LSTSVSTTEQ), 347-379 (DESQ…QSTP), 387-418 (EPQS…QSTP), 426-457 (EPQS…QSTP), and 465-484 (EPQS…STPT). Over residues 608 to 624 (PSSEEPGSGEVSGPLSP) the composition is skewed to low complexity.

The protein resides in the cytoplasm. It is found in the nucleus. Functionally, regulates the expression of selective PPARGC1A/B and ESRRA/B/G target genes with roles in glucose and lipid metabolism, energy transfer, contractile function, muscle mitochondrial biogenesis and oxidative capacity. Required for the efficient induction of MT-CO2, MT-CO3, COX4I1, TFB1M, TFB2M, POLRMT and SIRT3 by PPARGC1A. Positively regulates the PPARGC1A/ESRRG-induced expression of CKMT2, TNNI3 and SLC2A4 and negatively regulates the PPARGC1A/ESRRG-induced expression of PDK4. This is PGC-1 and ERR-induced regulator in muscle protein 1 (PERM1) from Bos taurus (Bovine).